The chain runs to 185 residues: ATP-dependent protease subunit HslV (185 aa).

Threonine 12 is a catalytic residue. The Na(+) site is built by alanine 168, cysteine 171, and threonine 174.

Belongs to the peptidase T1B family. HslV subfamily. As to quaternary structure, a double ring-shaped homohexamer of HslV is capped on each side by a ring-shaped HslU homohexamer. The assembly of the HslU/HslV complex is dependent on binding of ATP.

It is found in the cytoplasm. It carries out the reaction ATP-dependent cleavage of peptide bonds with broad specificity.. Its activity is regulated as follows. Allosterically activated by HslU binding. Its function is as follows. Protease subunit of a proteasome-like degradation complex believed to be a general protein degrading machinery. The polypeptide is ATP-dependent protease subunit HslV (Cereibacter sphaeroides (strain ATCC 17025 / ATH 2.4.3) (Rhodobacter sphaeroides)).